A 345-amino-acid polypeptide reads, in one-letter code: uncharacterized protein (345 aa).

Disordered regions lie at residues 1-58 (MPSP…WRGD) and 139-165 (KTNS…NSPK). The span at 27-39 (IKGEGSDDGKEKS) shows a compositional bias: basic and acidic residues. A compositionally biased stretch (polar residues) spans 154–165 (KQGSAESKNSPK).

Belongs to the MG307/MG309/MG338 family.

This is an uncharacterized protein from Mycoplasma pneumoniae (strain ATCC 29342 / M129 / Subtype 1) (Mycoplasmoides pneumoniae).